The primary structure comprises 163 residues: 2-amino-4-hydroxy-6-hydroxymethyldihydropteridine pyrophosphokinase (163 aa).

Belongs to the HPPK family.

It catalyses the reaction 6-hydroxymethyl-7,8-dihydropterin + ATP = (7,8-dihydropterin-6-yl)methyl diphosphate + AMP + H(+). It participates in cofactor biosynthesis; tetrahydrofolate biosynthesis; 2-amino-4-hydroxy-6-hydroxymethyl-7,8-dihydropteridine diphosphate from 7,8-dihydroneopterin triphosphate: step 4/4. Functionally, catalyzes the transfer of pyrophosphate from adenosine triphosphate (ATP) to 6-hydroxymethyl-7,8-dihydropterin, an enzymatic step in folate biosynthesis pathway. In Helicobacter pylori (strain ATCC 700392 / 26695) (Campylobacter pylori), this protein is 2-amino-4-hydroxy-6-hydroxymethyldihydropteridine pyrophosphokinase (folK).